We begin with the raw amino-acid sequence, 100 residues long: Small ribosomal subunit protein uS14c (100 aa).

The protein belongs to the universal ribosomal protein uS14 family. In terms of assembly, part of the 30S ribosomal subunit.

The protein localises to the plastid. The protein resides in the chloroplast. Functionally, binds 16S rRNA, required for the assembly of 30S particles. The chain is Small ribosomal subunit protein uS14c from Nasturtium officinale (Watercress).